Here is an 882-residue protein sequence, read N- to C-terminus: Valine--tRNA ligase (882 aa).

Residues 42 to 52 (PNVTGKLHLGH) carry the 'HIGH' region motif. The 'KMSKS' region motif lies at 522–526 (KMSKS). Lysine 525 lines the ATP pocket. Positions 849–873 (KIEIEKKKYESYCKQYKKLLESKNN) form a coiled coil.

It belongs to the class-I aminoacyl-tRNA synthetase family. ValS type 1 subfamily. Monomer.

Its subcellular location is the cytoplasm. It carries out the reaction tRNA(Val) + L-valine + ATP = L-valyl-tRNA(Val) + AMP + diphosphate. Functionally, catalyzes the attachment of valine to tRNA(Val). As ValRS can inadvertently accommodate and process structurally similar amino acids such as threonine, to avoid such errors, it has a 'posttransfer' editing activity that hydrolyzes mischarged Thr-tRNA(Val) in a tRNA-dependent manner. The sequence is that of Valine--tRNA ligase from Onion yellows phytoplasma (strain OY-M).